The sequence spans 171 residues: Ribosome maturation factor RimP (171 aa).

Belongs to the RimP family.

It is found in the cytoplasm. Its function is as follows. Required for maturation of 30S ribosomal subunits. The polypeptide is Ribosome maturation factor RimP (Anaeromyxobacter sp. (strain K)).